The chain runs to 386 residues: Protein phosphatase methylesterase 1 (386 aa).

A disordered region spans residues 1–38 (MSALEKSMHLGRLPSRPPLPGSGGSQSGAKMRMGPGRK). Ser-15 carries the phosphoserine modification. Arg-16 is modified (asymmetric dimethylarginine; alternate). Arg-16 carries the post-translational modification Omega-N-methylarginine; alternate. The active site involves Ser-156. Residues 255 to 265 (IEEEEEDEEGS) are compositionally biased toward acidic residues. Residues 255-280 (IEEEEEDEEGSESVNKRKKEDDMETK) form a disordered region. Over residues 268–280 (VNKRKKEDDMETK) the composition is skewed to basic and acidic residues. His-349 is a catalytic residue.

Belongs to the AB hydrolase superfamily. As to quaternary structure, binds PPP2CA and PPP2CB. Post-translationally, phosphorylated by SIK1 following increases in intracellular sodium, leading to dissociation from the protein phosphatase 2A (PP2A) complex and subsequent dephosphorylation of sodium/potassium-transporting ATPase ATP1A1.

The enzyme catalyses [phosphatase 2A protein]-C-terminal L-leucine methyl ester + H2O = [phosphatase 2A protein]-C-terminal L-leucine + methanol + H(+). Its function is as follows. Demethylates proteins that have been reversibly carboxymethylated. Demethylates PPP2CB (in vitro) and PPP2CA. Binding to PPP2CA displaces the manganese ion and inactivates the enzyme. The polypeptide is Protein phosphatase methylesterase 1 (Ppme1) (Rattus norvegicus (Rat)).